We begin with the raw amino-acid sequence, 360 residues long: Protein Wnt-2 (360 aa).

A signal peptide spans 1–37 (MIPRRSCWLILLLNLLNVQSLLDASWWSTVAQLSTAL). Intrachain disulfides connect Cys80/Cys91, Cys130/Cys138, Cys140/Cys158, Cys213/Cys227, Cys215/Cys222, Cys289/Cys320, Cys305/Cys315, Cys319/Cys359, Cys335/Cys350, Cys337/Cys347, and Cys342/Cys343. N-linked (GlcNAc...) asparagine glycosylation occurs at Asn90. The O-palmitoleoyl serine; by mom-1 moiety is linked to residue Ser219. N-linked (GlcNAc...) asparagine glycosylation is present at Asn352.

This sequence belongs to the Wnt family. In terms of processing, palmitoleoylation is required for efficient binding to frizzled receptors. Depalmitoleoylation leads to Wnt signaling pathway inhibition. Expressed in intestine, pharynx, anterior body wall muscle, vulva, some pharyngeal neurons and SMD head neurons. Expressed along the boundary between the intestine and muscle or hypodermis, but is also expressed in the hypodermis in cells including seam cells.

It localises to the secreted. Its subcellular location is the extracellular space. The protein resides in the extracellular matrix. In terms of biological role, ligand for members of the frizzled family of seven transmembrane receptors. Probable developmental protein. May be a signaling molecule which affects the development of discrete regions of tissues. Is likely to signal over only few cell diameters. Involved in the correct positioning of the developing nerve ring and in axon guidance of SIA and SIB neurons, probably by binding to tyrosine kinase receptor cam-1. In addition, regulates the positioning of some head neuronal cells, muscle arms associated with the nerve ring and the excretory pore. Together with Wnt ligand cwn-1, regulates the migration of CAN, ALM, BDU and HSN neurons during embryogenesis, the migration of QL and QR neuroblast descendants during larval development, and polarity of ALM neurons. May act through the wnt receptor cfz-2 to regulate QR neuroblast descendant migration, and to direct ALM migration. Also plays a role in axon growth and guidance in HSN and male CP neurons. In addition, together with wnt ligand cwn-1, negatively regulates developmental neurite pruning of AIM neurons probably by acting as a ligand for receptor tyrosine kinase cam-1. Through the cam-1 receptor also probably regulates the outgrowth of neurites from RME GABAergic motor neurons. May act redundantly with other Wnt ligands such as cwn-1 and mom-2 to control seam cell polarity. The protein is Protein Wnt-2 of Caenorhabditis elegans.